We begin with the raw amino-acid sequence, 574 residues long: Cytochrome P450 306a1 (574 aa).

The span at 303–314 (EKEQLRQSKEAD) shows a compositional bias: basic and acidic residues. The segment at 303–333 (EKEQLRQSKEADPSQEQSEADEDDEESDEED) is disordered. Residues 320–333 (SEADEDDEESDEED) are compositionally biased toward acidic residues. Residue cysteine 505 participates in heme binding.

Belongs to the cytochrome P450 family. Heme serves as cofactor. In terms of tissue distribution, first seen at the early (syncytial) blastoderm stage 4. During cellularization of the blastoderm (stage 5), stripes of expression appear and remain through to stage 10. Expression becomes undetectable during germ band retraction (stages 11-14). By stage 15, some expression resumes in the primordium of the ring gland, so that by stage 17 strong expression is seen, but only in the ring gland. This specific localization continues throughout the larval instars (at protein level). Expressed in the prothoracic gland cells of the larval ring gland (RG). Levels decline just after the molt to the third instar then increase later during the wandering stage. Low levels of expression are seen in the larval brain and fat body. In the adult, majority of expression is restricted to the ovaries, with low levels in the head and carcass of both sexes.

The protein resides in the endoplasmic reticulum membrane. The protein localises to the microsome membrane. It carries out the reaction 2,22,25-trideoxyecdysone + 2 reduced [adrenodoxin] + O2 + 2 H(+) = 2,22-dideoxyecdysone + 2 oxidized [adrenodoxin] + H2O. The protein operates within steroid biosynthesis; ecdysteroid biosynthesis. In terms of biological role, involved in the metabolism of insect hormones; responsible for ecdysteroid C25-hydroxylase activity. May be involved in the breakdown of synthetic insecticides. This Drosophila melanogaster (Fruit fly) protein is Cytochrome P450 306a1.